The primary structure comprises 296 residues: Co-chaperone protein DjlA (296 aa).

At 1–15 the chain is on the periplasmic side; the sequence is MNLRDFFVITTWWGK. A helical membrane pass occupies residues 16-39; sequence ILGAFFGYLTAGPVGALFGILVGN. Topologically, residues 40–296 are cytoplasmic; it reads FFDRGLVSYY…YELICETKGW (257 aa). Positions 200–225 are disordered; it reads QHYHNQQEYKHTSSSQGQQGYKPQSP. Over residues 211 to 221 the composition is skewed to polar residues; it reads TSSSQGQQGYK. Residues 231–296 enclose the J domain; it reads HAFALLEVSP…YELICETKGW (66 aa).

As to quaternary structure, homodimer.

The protein resides in the cell inner membrane. Its function is as follows. Regulatory DnaK co-chaperone. Direct interaction between DnaK and DjlA is needed for the induction of the wcaABCDE operon, involved in the synthesis of a colanic acid polysaccharide capsule, possibly through activation of the RcsB/RcsC phosphotransfer signaling pathway. The colanic acid capsule may help the bacterium survive conditions outside the host. In Legionella pneumophila subsp. pneumophila (strain Philadelphia 1 / ATCC 33152 / DSM 7513), this protein is Co-chaperone protein DjlA.